Here is a 325-residue protein sequence, read N- to C-terminus: MAAAMAEQEGSKGSARNRGGVQRVEGKLRASVEKGDYYEAHQMYRTLFFRYMSQSKHIEARELMYSGALLFFSHSQQNSAADLSMLVLESLEKHEVKVTEELLENLAKLFSLMDPNSPERVAFVSRALKWSSGGSGKFGHQKLHQFLAITLWKEQNYYESRYHFLHSSDGEGCANMLVEYSSTRGYRSEVDMFVAQAVLQFLCLKNKTSASVVFTTYTQKHPSIERGPPFVQPLLNFIWFLLLAVEGGKLTVFTVLCEQYQPSLKRDPMYNEYLDRIGQLFFGLPPKQSSSYGGLLGNLLNSLMGSGEDDDVEDGQEDSSPIELD.

2 disordered regions span residues 1–22 (MAAA…GGVQ) and 306–325 (SGED…IELD). The span at 307–317 (GEDDDVEDGQE) shows a compositional bias: acidic residues.

This sequence belongs to the GET4 family. In terms of assembly, component of the bag6/bat3 complex.

It is found in the cytoplasm. The protein resides in the cytosol. Functionally, as part of a cytosolic protein quality control complex, the bag6/bat3 complex, maintains misfolded and hydrophobic patches-containing proteins in a soluble state and participates in their proper delivery to the endoplasmic reticulum or alternatively can promote their sorting to the proteasome where they undergo degradation. The bag6/bat3 complex is involved in the post-translational delivery of tail-anchored/type II transmembrane proteins to the endoplasmic reticulum membrane. Similarly, the bag6/bat3 complex also functions as a sorting platform for proteins of the secretory pathway that are mislocalized to the cytosol either delivering them to the proteasome for degradation or to the endoplasmic reticulum. The bag6/bat3 complex also plays a role in the endoplasmic reticulum-associated degradation (ERAD), a quality control mechanism that eliminates unwanted proteins of the endoplasmic reticulum through their retrotranslocation to the cytosol and their targeting to the proteasome. It maintains these retrotranslocated proteins in an unfolded yet soluble state condition in the cytosol to ensure their proper delivery to the proteasome. The polypeptide is Golgi to ER traffic protein 4 homolog A (get4-a) (Xenopus laevis (African clawed frog)).